Consider the following 370-residue polypeptide: Nematocyst expressed protein 4 (370 aa).

Positions Met-1–Ala-19 are cleaved as a signal peptide. The tract at residues Ser-34–Asp-55 is disordered. Residues Ser-36–Gly-45 are compositionally biased toward gly residues. 3 consecutive ShKT domains span residues Cys-70–Cys-102, Cys-113–Cys-149, and Gly-155–His-190. 8 disulfide bridges follow: Cys-70/Cys-102, Cys-77/Cys-95, Cys-84/Cys-99, Cys-113/Cys-149, Cys-121/Cys-142, Cys-131/Cys-146, Cys-164/Cys-183, and Cys-173/Cys-187. The segment covering Pro-306 to Tyr-340 has biased composition (pro residues). Positions Pro-306–Ser-370 are disordered. Positions His-349 to Ser-370 are enriched in basic residues.

This sequence belongs to the NEP3 family. Nematocytes. In late planulae, transcripts are found throughout the ectoderm in nematocytes, with high concentration of expressing cells in the oral pole. In primary polyps, is expressed in nematocytes in the body wall and physa ectoderm and in the upper and lower pharynx.

It is found in the nematocyst. The protein localises to the secreted. The protein is Nematocyst expressed protein 4 of Nematostella vectensis (Starlet sea anemone).